Reading from the N-terminus, the 554-residue chain is CTP synthase (554 aa).

Residues 1–265 (MTPLIFVTGG…DELVIDQFKL (265 aa)) are amidoligase domain. Serine 13 lines the CTP pocket. UTP is bound at residue serine 13. Residues 14–19 (SLGKGI) and aspartate 71 contribute to the ATP site. Aspartate 71 and glutamate 139 together coordinate Mg(2+). CTP is bound by residues 146–148 (DIE), 186–191 (KTKPTQ), and lysine 222. UTP contacts are provided by residues 186–191 (KTKPTQ) and lysine 222. The Glutamine amidotransferase type-1 domain maps to 292 to 545 (NIAVVGKYVD…VRAAREKKAG (254 aa)). Glycine 353 contacts L-glutamine. Catalysis depends on cysteine 380, which acts as the Nucleophile; for glutamine hydrolysis. L-glutamine contacts are provided by residues 381-384 (YGMQ), glutamate 404, and arginine 471. Residues histidine 518 and glutamate 520 contribute to the active site.

Belongs to the CTP synthase family. As to quaternary structure, homotetramer.

The enzyme catalyses UTP + L-glutamine + ATP + H2O = CTP + L-glutamate + ADP + phosphate + 2 H(+). It catalyses the reaction L-glutamine + H2O = L-glutamate + NH4(+). The catalysed reaction is UTP + NH4(+) + ATP = CTP + ADP + phosphate + 2 H(+). The protein operates within pyrimidine metabolism; CTP biosynthesis via de novo pathway; CTP from UDP: step 2/2. Allosterically activated by GTP, when glutamine is the substrate; GTP has no effect on the reaction when ammonia is the substrate. The allosteric effector GTP functions by stabilizing the protein conformation that binds the tetrahedral intermediate(s) formed during glutamine hydrolysis. Inhibited by the product CTP, via allosteric rather than competitive inhibition. In terms of biological role, catalyzes the ATP-dependent amination of UTP to CTP with either L-glutamine or ammonia as the source of nitrogen. Regulates intracellular CTP levels through interactions with the four ribonucleotide triphosphates. In Xanthomonas axonopodis pv. citri (strain 306), this protein is CTP synthase.